The following is a 503-amino-acid chain: 5'-3' exonuclease PLD4 (503 aa).

At 1 to 36 (MDKKKEHPEMRIPLQTAVEVSDWPCSTSHDPHSGLG) the chain is on the cytoplasmic side. Residues 37-57 (MVLGMLAVLGLSSVTLILFLW) traverse the membrane as a signal-anchor for type II membrane protein segment. Residues 58 to 503 (QGATSFTSHR…RQVPSQDCVW (446 aa)) lie on the Lumenal side of the membrane. 3 N-linked (GlcNAc...) asparagine glycosylation sites follow: asparagine 89, asparagine 148, and asparagine 169. A disulfide bridge connects residues cysteine 92 and cysteine 248. The region spanning 207-234 (TGGVLHSKFWVVDGRHIYVGSANMDWRS) is the PLD phosphodiesterase 1 domain. Active-site residues include histidine 212, lysine 214, and aspartate 219. The active-site Proton donor is the histidine 212. N-linked (GlcNAc...) asparagine glycosylation is found at asparagine 247, asparagine 279, asparagine 415, and asparagine 425. Cysteine 377 and cysteine 501 form a disulfide bridge. Residues 421–447 (FSRVNHSKFMVTDKTAYVGTSNWSEDY) enclose the PLD phosphodiesterase 2 domain. Catalysis depends on residues histidine 426, lysine 428, and aspartate 433. Histidine 426 functions as the Nucleophile in the catalytic mechanism. An N-linked (GlcNAc...) asparagine glycan is attached at asparagine 442.

The protein belongs to the phospholipase D family. Post-translationally, highly N-glycosylated. In terms of tissue distribution, enriched in the white matter of early postnatal brains, as well as in splenic marginal zone cells. Highly expressed in dendritic cells (DCs) and other myeloid cells, with lower expression in B cell.

It localises to the endoplasmic reticulum membrane. The protein resides in the golgi apparatus. It is found in the trans-Golgi network membrane. Its subcellular location is the nucleus. The protein localises to the early endosome. It localises to the cytoplasmic vesicle. The protein resides in the phagosome. It is found in the lysosome. It carries out the reaction Exonucleolytic cleavage in the 5'- to 3'-direction to yield nucleoside 3'-phosphates.. The catalysed reaction is a 5'-end 5'-dephospho-ribonucleotidyl-ribonucleotide-RNA + H2O = a ribonucleoside 3'-phosphate + a 5'-end dephospho-ribonucleoside-RNA + H(+). The enzyme catalyses a ribonucleoside 3'-phosphate-2'-3'-cyclophospho-GMP + H2O = a ribonucleoside 3'-phosphate + 2',3'-cyclophospho-GMP + H(+). It catalyses the reaction a 5'-end 5'-dephospho-2'-deoxyribonucleotidyl-2'-deoxyribonucleotide in single-stranded DNA + H2O = a 5'-end dephospho-2'-deoxyribonucleoside in single-stranded DNA + a 2'-deoxyribonucleoside 3'-phosphate + H(+). It carries out the reaction a 5'-end 5'-phospho-2'-deoxyribonucleotide in single-stranded DNA + H2O = a 5'-end 5'-dephospho-2'-deoxyribonucleotide in single-stranded DNA + phosphate. The catalysed reaction is a 3-lyso-sn-glycero-1-phospho-(3'-acyl-1'-sn-glycerol) + a 1-acyl-sn-glycerol = a 3-acyl-sn-glycero-1-phospho-(3'-acyl-1'-sn-glycerol) + glycerol. The enzyme catalyses 3-lyso-sn-glycero-1-phospho-(3'-(9Z-octadecenoyl)-1'-sn-glycerol) + 1-(9Z-octadecenoyl)-sn-glycerol = 3-(9Z-octadecenoyl)-sn-glycero-1-phospho-(3'-(9Z-octadecenoyl)-1'-sn-glycerol) + glycerol. The exonuclease activity toward ssDNA substrate is Ca(2+) and Mg(2+)-independent, but it is inhibited by Fe(2+), Cu(2+) and to a lesser extent Zn(2+) ions. 5'-&gt;3' exonuclease that hydrolyzes the phosphodiester bond of single-stranded DNA (ssDNA) and RNA molecules to form nucleoside 3'-monophosphates and 5'-end 5'-hydroxy deoxyribonucleotide/ribonucleotide fragments. Partially redundant with PLD4, can cleave all four nucleotides displaying higher efficiency for ssDNA and RNA fragments initiated with uridine and guanosine residues and lower efficiency for cytidine-initiated substrates. As a result, it does not always degrade polynucleotides to the single nucleotide level, it can stall at specific sites sparing certain fragments from exonucleolytic degradation. Processes self and pathogenic ssDNA and RNA molecules that reach the endolysosomal compartment via phagocytosis or autophagy and may serve as 'danger' signals for recognition by innate immune receptors such as toll-like receptors (TLRs). Degrades mitochondrial CpG-rich ssDNA fragments to prevent TLR9 activation and autoinflammatory response, but it can cleave viral RNA to generate ligands for TLR7 activation and initiate antiviral immune responses. In plasmacytoid dendritic cells, it cooperates with endonuclease RNASET2 to release 2',3'-cyclic guanosine monophosphate (2',3'-cGMP), a potent stimulatory ligand for TLR7. Produces 2',3'-cGMPs and cytidine-rich RNA fragments that occupy TLR7 ligand-binding pockets and trigger a signaling-competent state. Can exert polynucleotide phosphatase activity toward 5'-phosphorylated ssDNA substrates although at a slow rate. Transphosphatidylase that catalyzes the exchange with R to S stereo-inversion of the glycerol moiety between (S,R)-lysophosphatidylglycerol (LPG) and monoacylglycerol (MAG) substrates to yield (S,S)-bis(monoacylglycero)phosphate (BMP). Can synthesize a variety of (S,S)-BMPs representing the main phospholipid constituent of lysosomal intralumenal vesicle (ILV) membranes that bind acid hydrolases for lipid degradation. Regulates the homeostasis and interorganellar communication of the endolysosomal system with an overall impact on cellular removal of dysfunctional organelles via autophagy as well as proper protein and lipid turnover. May play a role in myotube formation in response to ER stress. The polypeptide is 5'-3' exonuclease PLD4 (Mus musculus (Mouse)).